A 252-amino-acid polypeptide reads, in one-letter code: Trans-aconitate 2-methyltransferase (252 aa).

The protein belongs to the methyltransferase superfamily. Tam family.

It localises to the cytoplasm. The enzyme catalyses trans-aconitate + S-adenosyl-L-methionine = (E)-3-(methoxycarbonyl)pent-2-enedioate + S-adenosyl-L-homocysteine. Its function is as follows. Catalyzes the S-adenosylmethionine monomethyl esterification of trans-aconitate. This Shigella flexneri serotype 5b (strain 8401) protein is Trans-aconitate 2-methyltransferase.